The sequence spans 277 residues: Pantothenate synthetase (277 aa).

Position 26–33 (26–33 (MGNLHAGH)) interacts with ATP. Histidine 33 serves as the catalytic Proton donor. Glutamine 57 serves as a coordination point for (R)-pantoate. Beta-alanine is bound at residue glutamine 57. 143-146 (GEKD) provides a ligand contact to ATP. (R)-pantoate is bound at residue glutamine 149. Residues valine 172 and 180–183 (LSSR) contribute to the ATP site.

It belongs to the pantothenate synthetase family. As to quaternary structure, homodimer.

The protein resides in the cytoplasm. It catalyses the reaction (R)-pantoate + beta-alanine + ATP = (R)-pantothenate + AMP + diphosphate + H(+). It functions in the pathway cofactor biosynthesis; (R)-pantothenate biosynthesis; (R)-pantothenate from (R)-pantoate and beta-alanine: step 1/1. Functionally, catalyzes the condensation of pantoate with beta-alanine in an ATP-dependent reaction via a pantoyl-adenylate intermediate. The chain is Pantothenate synthetase from Nitrosomonas europaea (strain ATCC 19718 / CIP 103999 / KCTC 2705 / NBRC 14298).